The sequence spans 910 residues: Leucine--tRNA ligase (910 aa).

The 'HIGH' region motif lies at 50–60; that stretch reads PYTNGSLHVGH. The 'KMSKS' region motif lies at 611 to 615; that stretch reads KISKS. K614 is an ATP binding site.

The protein belongs to the class-I aminoacyl-tRNA synthetase family.

The protein resides in the cytoplasm. It catalyses the reaction tRNA(Leu) + L-leucine + ATP = L-leucyl-tRNA(Leu) + AMP + diphosphate. In Thermoplasma volcanium (strain ATCC 51530 / DSM 4299 / JCM 9571 / NBRC 15438 / GSS1), this protein is Leucine--tRNA ligase.